A 250-amino-acid polypeptide reads, in one-letter code: Cobalt transport protein CbiM (250 aa).

Positions 1–27 are cleaved as a signal peptide; sequence MKKPLFFIASACVTIYILFALSPSVYA. 6 helical membrane-spanning segments follow: residues 33–53, 70–90, 102–122, 134–154, 168–188, and 208–228; these read GFLP…FFLV, LLLA…IPSV, LGAL…VLLF, TLGA…YVLF, VFLA…IQLA, and IFAV…VVVW.

Belongs to the CbiM family. In terms of assembly, forms an energy-coupling factor (ECF) transporter complex composed of an ATP-binding protein (A component, CbiO), a transmembrane protein (T component, CbiQ) and 2 possible substrate-capture proteins (S components, CbiM and CbiN) of unknown stoichimetry.

It localises to the cell membrane. It participates in cofactor biosynthesis; adenosylcobalamin biosynthesis. Its function is as follows. Part of the energy-coupling factor (ECF) transporter complex CbiMNOQ involved in cobalt import. The polypeptide is Cobalt transport protein CbiM (Anoxybacillus flavithermus (strain DSM 21510 / WK1)).